The chain runs to 498 residues: ATP synthase subunit beta, chloroplastic (498 aa).

An ATP-binding site is contributed by 172–179; that stretch reads GGAGVGKT.

It belongs to the ATPase alpha/beta chains family. F-type ATPases have 2 components, CF(1) - the catalytic core - and CF(0) - the membrane proton channel. CF(1) has five subunits: alpha(3), beta(3), gamma(1), delta(1), epsilon(1). CF(0) has four main subunits: a(1), b(1), b'(1) and c(9-12).

The protein resides in the plastid. The protein localises to the chloroplast thylakoid membrane. The enzyme catalyses ATP + H2O + 4 H(+)(in) = ADP + phosphate + 5 H(+)(out). Its function is as follows. Produces ATP from ADP in the presence of a proton gradient across the membrane. The catalytic sites are hosted primarily by the beta subunits. This Licuala grandis (Ruffled fan palm) protein is ATP synthase subunit beta, chloroplastic.